The primary structure comprises 926 residues: Alpha-aminoadipic semialdehyde synthase, mitochondrial (926 aa).

The transit peptide at 1 to 27 (MLRVSRTKLGRLSPSLSRGLHHKAVMA) directs the protein to the mitochondrion. Residues 28–455 (LRREDVNAWE…DAVIASNGML (428 aa)) form a lysine-ketoglutarate reductase region. 2 positions are modified to N6-acetyllysine: Lys-48 and Lys-56. An N6-acetyllysine; alternate modification is found at Lys-93. Lys-93 carries the N6-succinyllysine; alternate modification. The residue at position 128 (Lys-128) is an N6-acetyllysine. The residue at position 138 (Lys-138) is an N6-acetyllysine; alternate. Lys-138 carries the post-translational modification N6-succinyllysine; alternate. Position 274 is an N6-succinyllysine (Lys-274). The residue at position 286 (Lys-286) is an N6-acetyllysine; alternate. Lys-286 is subject to N6-succinyllysine; alternate. N6-succinyllysine is present on Lys-333. Lys-458 is modified (N6-acetyllysine; alternate). N6-succinyllysine; alternate is present on Lys-458. The segment at 477–926 (MGTKKKVLVL…MYTTQSTIKL (450 aa)) is saccharopine dehydrogenase. NAD(+)-binding residues include Ser-488, Asp-512, and Gln-516. 2 positions are modified to N6-acetyllysine; alternate: Lys-523 and Lys-535. Residues Lys-523 and Lys-535 each carry the N6-succinyllysine; alternate modification. Leu-554, Ala-576, and Ser-577 together coordinate NAD(+). 577-578 (SY) contributes to the L-saccharopine binding site. Position 584 is an N6-acetyllysine; alternate (Lys-584). Position 584 is an N6-succinyllysine; alternate (Lys-584). The NAD(+) site is built by Leu-603, Asp-604, and Pro-605. Position 604 (Asp-604) interacts with L-saccharopine. Arg-703 is an L-saccharopine binding site. N6-acetyllysine is present on Lys-707. 724–726 (TLR) provides a ligand contact to L-saccharopine. The residue at position 732 (Lys-732) is an N6-succinyllysine. Lys-739 is modified (N6-acetyllysine). Residue Lys-761 is modified to N6-acetyllysine; alternate. An N6-succinyllysine; alternate modification is found at Lys-761. Position 780 is an N6-acetyllysine (Lys-780).

It in the N-terminal section; belongs to the AlaDH/PNT family. In the C-terminal section; belongs to the saccharopine dehydrogenase family. In terms of assembly, homotetramer.

The protein resides in the mitochondrion. It catalyses the reaction L-saccharopine + NADP(+) + H2O = L-lysine + 2-oxoglutarate + NADPH + H(+). The enzyme catalyses L-saccharopine + NAD(+) + H2O = (S)-2-amino-6-oxohexanoate + L-glutamate + NADH + H(+). The protein operates within amino-acid degradation; L-lysine degradation via saccharopine pathway; glutaryl-CoA from L-lysine: step 1/6. Its pathway is amino-acid degradation; L-lysine degradation via saccharopine pathway; glutaryl-CoA from L-lysine: step 2/6. In terms of biological role, bifunctional enzyme that catalyzes the first two steps in lysine degradation. The sequence is that of Alpha-aminoadipic semialdehyde synthase, mitochondrial from Bos taurus (Bovine).